Reading from the N-terminus, the 177-residue chain is Large ribosomal subunit protein uL6 (177 aa).

This sequence belongs to the universal ribosomal protein uL6 family. As to quaternary structure, part of the 50S ribosomal subunit.

Functionally, this protein binds to the 23S rRNA, and is important in its secondary structure. It is located near the subunit interface in the base of the L7/L12 stalk, and near the tRNA binding site of the peptidyltransferase center. In Verminephrobacter eiseniae (strain EF01-2), this protein is Large ribosomal subunit protein uL6.